The chain runs to 450 residues: Regulator of sigma-E protease RseP (450 aa).

Residues 1–21 form a helical membrane-spanning segment; that stretch reads MLSFLWDLASFIVALGVLITV. Histidine 22 is a binding site for Zn(2+). At 22–103 the chain is on the periplasmic side; that stretch reads HEFGHFWVAR…VGQRAAIIAA (82 aa). Glutamate 23 is a catalytic residue. Histidine 26 contacts Zn(2+). The chain crosses the membrane as a helical span at residues 104–124; it reads GPVANFIFAIFAYWLVFIIGV. Residues 125 to 375 are Cytoplasmic-facing; sequence PGVRPVVGEI…KGAGMTAELG (251 aa). PDZ domains follow at residues 127–220 and 222–309; these read VRPV…PRGP and IEPV…PKVI. A helical transmembrane segment spans residues 376–396; sequence VVYYLPFLALISVNLGIINLF. The Periplasmic segment spans residues 397 to 429; the sequence is PLPVLDGGHLLFLAIEKIKGGPVSERVQDFCYR. The helical transmembrane segment at 430 to 450 threads the bilayer; that stretch reads IGSILLVLLMGLALFNDFSRL.

It belongs to the peptidase M50B family. In terms of assembly, interacts with RseA; the third transmembrane domain can be cross-linked to the transmembrane domain of RseA. The cofactor is Zn(2+).

Its subcellular location is the cell inner membrane. With respect to regulation, inhibited by Zn(2+) chelator 1,10-phenanthroline. In terms of biological role, a site-2 regulated intramembrane protease (S2P) that cleaves the peptide bond between 'Ala-108' and 'Cys-109' in the transmembrane region of RseA. Part of a regulated intramembrane proteolysis (RIP) cascade. Acts on DegS-cleaved RseA to release the cytoplasmic domain of RseA, residue 'Val-148' of RseA may be required for this. This provides the cell with sigma-E (RpoE) activity through the proteolysis of RseA. Can also cleave sequences in transmembrane regions of other proteins (such as LacY) as well as liberated signal peptides of beta-lactamase, OmpF, LivK, SecM, PhoA, LivJ, OmpC, Lpp and TorA, probably within the membrane. Cleaves FecR within its transmembrane region to release an N-terminal cytoplasmic fragment which binds to sigma factor FecI, allowing it to activate transcription of the fecABCDE operon which mediates ferric citrate transport. This Escherichia coli (strain K12) protein is Regulator of sigma-E protease RseP (rseP).